The primary structure comprises 506 residues: Maturase K (506 aa).

Belongs to the intron maturase 2 family. MatK subfamily.

It is found in the plastid. Its subcellular location is the chloroplast. Usually encoded in the trnK tRNA gene intron. Probably assists in splicing its own and other chloroplast group II introns. The sequence is that of Maturase K from Austrosteenisia blackii (Blood vine).